The primary structure comprises 634 residues: Probable potassium transport system protein Kup 2 (634 aa).

12 helical membrane passes run 20–40 (FWTL…TSPL), 64–84 (VLSL…VLLI), 110–130 (FAAI…DAII), 148–168 (PGFD…LFLV), 174–194 (AAVA…MAVA), 224–244 (AGLL…ALYA), 258–278 (WLVL…AMLL), 290–310 (LLFP…ATII), 348–368 (IYIP…VFAF), 377–397 (AYGI…FFVM), 405–425 (AAVA…FLMA), and 430–450 (IVDG…VMVT).

The protein belongs to the HAK/KUP transporter (TC 2.A.72) family.

It is found in the cell inner membrane. The enzyme catalyses K(+)(in) + H(+)(in) = K(+)(out) + H(+)(out). Functionally, transport of potassium into the cell. Likely operates as a K(+):H(+) symporter. The protein is Probable potassium transport system protein Kup 2 of Rhodopseudomonas palustris (strain ATCC BAA-98 / CGA009).